Here is a 266-residue protein sequence, read N- to C-terminus: Type III pantothenate kinase (266 aa).

Residue 9-16 (DAGNSRIK) participates in ATP binding. Substrate contacts are provided by residues Tyr-96 and 103-106 (GSDR). The active-site Proton acceptor is the Asp-105. Residue Thr-129 participates in ATP binding. Position 189 (Thr-189) interacts with substrate.

The protein belongs to the type III pantothenate kinase family. As to quaternary structure, homodimer. It depends on NH4(+) as a cofactor. K(+) is required as a cofactor.

Its subcellular location is the cytoplasm. The enzyme catalyses (R)-pantothenate + ATP = (R)-4'-phosphopantothenate + ADP + H(+). Its pathway is cofactor biosynthesis; coenzyme A biosynthesis; CoA from (R)-pantothenate: step 1/5. Catalyzes the phosphorylation of pantothenate (Pan), the first step in CoA biosynthesis. The polypeptide is Type III pantothenate kinase (Burkholderia cenocepacia (strain ATCC BAA-245 / DSM 16553 / LMG 16656 / NCTC 13227 / J2315 / CF5610) (Burkholderia cepacia (strain J2315))).